We begin with the raw amino-acid sequence, 780 residues long: Protein SAV (780 aa).

ATP is bound by residues 253–260 and 528–535; these read GPPGTGKT.

The protein belongs to the AAA ATPase family. CDC48 subfamily.

Not yet known, shows ATPase activity. The chain is Protein SAV (sav) from Sulfolobus acidocaldarius (strain ATCC 33909 / DSM 639 / JCM 8929 / NBRC 15157 / NCIMB 11770).